Consider the following 281-residue polypeptide: Gas vesicle protein L1 (281 aa).

It belongs to the gas vesicle GvpF/GvpL family. In terms of assembly, may form oligomers. GvpF to GvpM interact with each other in vitro, and may form multi-subunit complex(es). Interacts with GvpC1, GvpN1 and GvpO1.

Its subcellular location is the gas vesicle. The protein localises to the cytoplasm. Proteins GvpF to GvpM might be involved in nucleating gas vesicle formation. A minor component of the gas vesicle. This the only minor gas vesicle protein that binds all the others (including GvpC1, GvpN1 and GvpO1, but not GvpA1), suggesting it might be able to assemble them. Gas vesicles are hollow, gas filled proteinaceous nanostructures found in several microbial planktonic microorganisms. They allow positioning of halobacteria at the optimal depth for growth in the poorly aerated, shallow brine pools of their habitat. In terms of biological role, expression of a 9.5 kb p-vac DNA fragment containing 2 divergently transcribed regions (gvpD-gvpE-gvpF-gvpG-gvpH-gvpI-gvpJ-gvpK-gvpL-gvpM and gvpA-gvpC-gvpN-gvpO) allows H.volcanii to produce gas vesicles. A minimal gas vesicle can be made in H.volcanii by gvpA1-gvpO1 plus gvpF1-gvpG1-gvpJ1-gvpK1-gvpL1-gvpM1; lack of enough GvpJ1 prevents their formation. A similar region restores gas vesicle production in H.halobium without the p-vac locus, but it still has the c-vac locus. The protein is Gas vesicle protein L1 (gvpL11) of Halobacterium salinarum (strain ATCC 700922 / JCM 11081 / NRC-1) (Halobacterium halobium).